The sequence spans 123 residues: Large ribosomal subunit protein bL20 (123 aa).

The protein belongs to the bacterial ribosomal protein bL20 family.

In terms of biological role, binds directly to 23S ribosomal RNA and is necessary for the in vitro assembly process of the 50S ribosomal subunit. It is not involved in the protein synthesizing functions of that subunit. The protein is Large ribosomal subunit protein bL20 (rplT) of Chlamydia muridarum (strain MoPn / Nigg).